The chain runs to 1499 residues: Condensin complex subunit 1 (1499 aa).

Disordered regions lie at residues 1-43 (MPRK…DGLS) and 1421-1499 (ITKN…MLDD). Positions 1432 to 1446 (PTTMSGSSRTTSRAA) are enriched in low complexity. 2 stretches are compositionally biased toward acidic residues: residues 1458 to 1467 (SDEDDSDSDD) and 1486 to 1499 (ADDD…MLDD).

Belongs to the CND1 (condensin subunit 1) family. Component of the condensin I complex, which contains the mix-1/SMC2 and smc-4/SMC4 heterodimer, and three non SMC subunits that probably regulate the complex: dpy-26, capg-1 and dpy-28. Within the complex, interacts with dpy-26 and smc-4. Component of the dosage compensation complex, which consist of the condensin I like components mix-1/SMC2 and dpy-27/SMC4, and the three non SMC subunits dpy-26, capg-1 and dpy-28. Within the complex, interacts with mix-1, dpy-27, dpy-26 and capg-1. Interacts with smcl-1. In terms of processing, sumoylated. Sumoylated in the context of the dosage compensation complex but not in the condensin I complex. Sumoylation is important for assembly of the dosage compensation complex and its robust binding to the X chromosome. In terms of tissue distribution, expressed in somatic and germline tissues (at protein level).

The protein resides in the nucleus. Its subcellular location is the chromosome. In terms of biological role, required for both chromosome condensation and segregation during mitosis and meiosis and X-chromosome dosage compensation depending on its binding partners. Regulatory subunit of the condensin I complex, a complex required for conversion of interphase chromatin into mitotic-like condense chromosomes. The condensin I complex probably introduces positive supercoils into relaxed DNA in the presence of type I topoisomerases and converts nicked DNA into positive knotted forms in the presence of type II topoisomerases. The condensin I complex function is required for proper chromosome segregation in mitosis and meiosis. As a member of the condensin I complex, further controls the crossover number and distribution in meiosis by restricting double strand break formation, possibly by influencing higher-order chromosome structure. Plays a role in robust cytokinesis upon presence of chromatin obstructions. Also a member of the condensin I-like dosage compensation complex that associates specifically with hermaphrodite X chromosomes to reduce their gene transcription during interphase, possibly through chromatin reorganization. The protein is Condensin complex subunit 1 of Caenorhabditis elegans.